Here is a 620-residue protein sequence, read N- to C-terminus: Chaperone protein HscA homolog (620 aa).

The protein belongs to the heat shock protein 70 family.

Its function is as follows. Chaperone involved in the maturation of iron-sulfur cluster-containing proteins. Has a low intrinsic ATPase activity which is markedly stimulated by HscB. The chain is Chaperone protein HscA homolog from Shewanella baltica (strain OS155 / ATCC BAA-1091).